Here is a 73-residue protein sequence, read N- to C-terminus: Omega-conotoxin GVIA (73 aa).

Positions 1–22 are cleaved as a signal peptide; that stretch reads MKLTCVVIVAVLLLTACQLITA. A propeptide spanning residues 23 to 45 is cleaved from the precursor; the sequence is DDSRGTQKHRALGSTTELSLSTR. Cystine bridges form between C46-C61, C53-C64, and C60-C71. 4-hydroxyproline occurs at positions 49, 55, and 66. A Tyrosine amide; in form omega-conotoxin GVIA modification is found at Y72.

This sequence belongs to the conotoxin O1 superfamily. As to expression, expressed by the venom duct.

The protein resides in the secreted. Omega-conotoxins act at presynaptic membranes, they bind and block voltage-gated calcium channels (Cav). This toxin blocks N-type calcium channels (Cav2.2/CACNA1B) with a high potency (it displaces [125I]GVIA with an IC(50)=3.7-38 pM). This chain is Omega-conotoxin GVIA, found in Conus geographus (Geography cone).